We begin with the raw amino-acid sequence, 459 residues long: MSNRFAVILAAGKGTRMKSKLYKVLHPVCGKPMVQHVVDQVSQLGLQKLVTVVGHGAEMVQEQLGNVSEFALQAEQLGTAHAVDQAASVLANEEGTTLVICGDTPLITAETMEALLQQHKEAGAMATVLTAYIEEPAGYGRIVRNENGHVEKIVEHKDANEKELAIKEINTGTYCFDNKALFASLSKVSNDNVQGEYYLPDVIEILKNEGHIVSAYQTEQFDETLGVNDRVALSQAEIIMKNRINRKNMVNGVTIIDPSNTYISADAVIGSDTVLHPGTIIEGNTVIGSDCEIGPHTVIRDSEIGDRTTIRQSTVHDSKLGTEVSVGPFAHIRPDSVIGDEVRVGNFVEIKKTVFGNRSKASHLSYIGDAQVGEDVNLGCGSITVNYDGKNKFKTVIGNGVFIGCNSNLVAPVTVEDGAYVAAGSTITENVPSKALSVARARQVNKEDYVDQLLNKKKS.

The pyrophosphorylase stretch occupies residues 1-230 (MSNRFAVILA…FDETLGVNDR (230 aa)). UDP-N-acetyl-alpha-D-glucosamine-binding positions include 9–12 (LAAG), Lys23, Gln73, and 78–79 (GT). Asp103 lines the Mg(2+) pocket. UDP-N-acetyl-alpha-D-glucosamine is bound by residues Gly140, Glu155, Asn170, and Asn228. Residue Asn228 coordinates Mg(2+). Residues 231-251 (VALSQAEIIMKNRINRKNMVN) form a linker region. The tract at residues 252 to 459 (GVTIIDPSNT…VDQLLNKKKS (208 aa)) is N-acetyltransferase. UDP-N-acetyl-alpha-D-glucosamine-binding residues include Arg333 and Lys351. Catalysis depends on His363, which acts as the Proton acceptor. Positions 366 and 377 each coordinate UDP-N-acetyl-alpha-D-glucosamine. Acetyl-CoA contacts are provided by residues 386 to 387 (NY), Ala423, and Arg440.

In the N-terminal section; belongs to the N-acetylglucosamine-1-phosphate uridyltransferase family. This sequence in the C-terminal section; belongs to the transferase hexapeptide repeat family. As to quaternary structure, homotrimer. The cofactor is Mg(2+).

It localises to the cytoplasm. The catalysed reaction is alpha-D-glucosamine 1-phosphate + acetyl-CoA = N-acetyl-alpha-D-glucosamine 1-phosphate + CoA + H(+). The enzyme catalyses N-acetyl-alpha-D-glucosamine 1-phosphate + UTP + H(+) = UDP-N-acetyl-alpha-D-glucosamine + diphosphate. The protein operates within nucleotide-sugar biosynthesis; UDP-N-acetyl-alpha-D-glucosamine biosynthesis; N-acetyl-alpha-D-glucosamine 1-phosphate from alpha-D-glucosamine 6-phosphate (route II): step 2/2. It participates in nucleotide-sugar biosynthesis; UDP-N-acetyl-alpha-D-glucosamine biosynthesis; UDP-N-acetyl-alpha-D-glucosamine from N-acetyl-alpha-D-glucosamine 1-phosphate: step 1/1. It functions in the pathway bacterial outer membrane biogenesis; LPS lipid A biosynthesis. Its function is as follows. Catalyzes the last two sequential reactions in the de novo biosynthetic pathway for UDP-N-acetylglucosamine (UDP-GlcNAc). The C-terminal domain catalyzes the transfer of acetyl group from acetyl coenzyme A to glucosamine-1-phosphate (GlcN-1-P) to produce N-acetylglucosamine-1-phosphate (GlcNAc-1-P), which is converted into UDP-GlcNAc by the transfer of uridine 5-monophosphate (from uridine 5-triphosphate), a reaction catalyzed by the N-terminal domain. The sequence is that of Bifunctional protein GlmU from Bacillus cereus (strain ATCC 14579 / DSM 31 / CCUG 7414 / JCM 2152 / NBRC 15305 / NCIMB 9373 / NCTC 2599 / NRRL B-3711).